Reading from the N-terminus, the 364-residue chain is Lipoyl synthase, mitochondrial (364 aa).

A disordered region spans residues 34 to 53 (PNFQDFIQNSDNSKDDFENY). Positions 99, 104, 110, 130, 134, 137, and 345 each coordinate [4Fe-4S] cluster. One can recognise a Radical SAM core domain in the interval 115–334 (EHGTQTATIM…EQRGNELGFL (220 aa)).

This sequence belongs to the radical SAM superfamily. Lipoyl synthase family. Requires [4Fe-4S] cluster as cofactor.

It localises to the mitochondrion. The catalysed reaction is [[Fe-S] cluster scaffold protein carrying a second [4Fe-4S](2+) cluster] + N(6)-octanoyl-L-lysyl-[protein] + 2 oxidized [2Fe-2S]-[ferredoxin] + 2 S-adenosyl-L-methionine + 4 H(+) = [[Fe-S] cluster scaffold protein] + N(6)-[(R)-dihydrolipoyl]-L-lysyl-[protein] + 4 Fe(3+) + 2 hydrogen sulfide + 2 5'-deoxyadenosine + 2 L-methionine + 2 reduced [2Fe-2S]-[ferredoxin]. Its pathway is protein modification; protein lipoylation via endogenous pathway; protein N(6)-(lipoyl)lysine from octanoyl-[acyl-carrier-protein]: step 2/2. Functionally, catalyzes the radical-mediated insertion of two sulfur atoms into the C-6 and C-8 positions of the octanoyl moiety bound to the lipoyl domains of lipoate-dependent enzymes, thereby converting the octanoylated domains into lipoylated derivatives. In Drosophila grimshawi (Hawaiian fruit fly), this protein is Lipoyl synthase, mitochondrial.